The following is a 532-amino-acid chain: 2,3-bisphosphoglycerate-independent phosphoglycerate mutase (532 aa).

Mn(2+) contacts are provided by Asp-15 and Ser-65. Catalysis depends on Ser-65, which acts as the Phosphoserine intermediate. Residues His-126, 156 to 157 (RD), Arg-188, Arg-194, 258 to 261 (RPDR), and Lys-331 contribute to the substrate site. Asp-398, His-402, Asp-439, His-440, and His-457 together coordinate Mn(2+).

The protein belongs to the BPG-independent phosphoglycerate mutase family. As to quaternary structure, monomer. Mn(2+) serves as cofactor.

The enzyme catalyses (2R)-2-phosphoglycerate = (2R)-3-phosphoglycerate. The protein operates within carbohydrate degradation; glycolysis; pyruvate from D-glyceraldehyde 3-phosphate: step 3/5. Catalyzes the interconversion of 2-phosphoglycerate and 3-phosphoglycerate. This chain is 2,3-bisphosphoglycerate-independent phosphoglycerate mutase, found in Trichodesmium erythraeum (strain IMS101).